The chain runs to 149 residues: Potassium binding protein Kbp (149 aa).

Positions 23-91 (DKDDQAKKVQ…SVDDQVKTAT (69 aa)) constitute a BON domain. The LysM domain occupies 97 to 146 (QFYTVKSGDTLSAISKQVYGNANLYNKIFEANKPMLKSPDKIYPGQVLRI).

It is found in the cytoplasm. Highly specific potassium binding protein that is required for normal growth in the presence of high levels of external K(+). May act as a sensor of cytoplasmic K(+) concentration. The protein is Potassium binding protein Kbp of Escherichia coli O6:H1 (strain CFT073 / ATCC 700928 / UPEC).